Consider the following 222-residue polypeptide: Protein-L-isoaspartate O-methyltransferase (222 aa).

Ser67 is an active-site residue.

It belongs to the methyltransferase superfamily. L-isoaspartyl/D-aspartyl protein methyltransferase family.

The protein localises to the cytoplasm. The enzyme catalyses [protein]-L-isoaspartate + S-adenosyl-L-methionine = [protein]-L-isoaspartate alpha-methyl ester + S-adenosyl-L-homocysteine. Catalyzes the methyl esterification of L-isoaspartyl residues in peptides and proteins that result from spontaneous decomposition of normal L-aspartyl and L-asparaginyl residues. It plays a role in the repair and/or degradation of damaged proteins. The protein is Protein-L-isoaspartate O-methyltransferase of Parvibaculum lavamentivorans (strain DS-1 / DSM 13023 / NCIMB 13966).